The primary structure comprises 252 residues: MTELKKTFADQKRKTVETAEFTEDGRYKRKIRSFVLRTGRLSEYQRQMMNDNWSNYGLDYQTEPFDFPAIYGNHNPVILEIGFGMGKSLVEMAQQNPDKNYLGIEVHTPGVGACLAYALEKGIKNLRVICHDATEILRDCIADRSLGGLQLFFPDPWHKAKHHKRRIVQPQFVKTVTQKLTSGGFIHFATDWQNYAEHMLNVLQSVQSAVGIRNISETGDFIPRPDFRPLTKFEQRGQKLGHGIWDLYFIKN.

Glutamate 80, glutamate 105, aspartate 132, and aspartate 155 together coordinate S-adenosyl-L-methionine. Residue aspartate 155 is part of the active site. Substrate-binding positions include lysine 159, aspartate 191, and 231-234 (TKFE).

Belongs to the class I-like SAM-binding methyltransferase superfamily. TrmB family.

It carries out the reaction guanosine(46) in tRNA + S-adenosyl-L-methionine = N(7)-methylguanosine(46) in tRNA + S-adenosyl-L-homocysteine. Its pathway is tRNA modification; N(7)-methylguanine-tRNA biosynthesis. Catalyzes the formation of N(7)-methylguanine at position 46 (m7G46) in tRNA. The polypeptide is tRNA (guanine-N(7)-)-methyltransferase (Actinobacillus succinogenes (strain ATCC 55618 / DSM 22257 / CCUG 43843 / 130Z)).